We begin with the raw amino-acid sequence, 243 residues long: NAD-dependent protein deacetylase (243 aa).

The Deacetylase sirtuin-type domain maps to 1-243 (MKHDLETLKH…VSVVKSLMTE (243 aa)). Residues alanine 24, phenylalanine 35, arginine 36, glutamine 105, isoleucine 107, aspartate 108, and histidine 123 each contribute to the NAD(+) site. Phenylalanine 35 lines the nicotinamide pocket. Positions 107 and 108 each coordinate nicotinamide. Histidine 123 functions as the Proton acceptor in the catalytic mechanism. Zn(2+) is bound by residues cysteine 131, cysteine 134, cysteine 151, and cysteine 154. Residues serine 192, serine 193, asparagine 215, and aspartate 232 each contribute to the NAD(+) site.

The protein belongs to the sirtuin family. Class U subfamily. Zn(2+) serves as cofactor.

Its subcellular location is the cytoplasm. The catalysed reaction is N(6)-acetyl-L-lysyl-[protein] + NAD(+) + H2O = 2''-O-acetyl-ADP-D-ribose + nicotinamide + L-lysyl-[protein]. Functionally, NAD-dependent protein deacetylase which modulates the activities of several enzymes which are inactive in their acetylated form. In Staphylococcus aureus (strain COL), this protein is NAD-dependent protein deacetylase.